The sequence spans 326 residues: Homoserine kinase (326 aa).

Belongs to the pseudomonas-type ThrB family.

The enzyme catalyses L-homoserine + ATP = O-phospho-L-homoserine + ADP + H(+). Its pathway is amino-acid biosynthesis; L-threonine biosynthesis; L-threonine from L-aspartate: step 4/5. This Sinorhizobium medicae (strain WSM419) (Ensifer medicae) protein is Homoserine kinase.